The following is a 333-amino-acid chain: Photosystem II assembly lipoprotein Ycf48 (333 aa).

Positions 1–23 are cleaved as a signal peptide; sequence MNRLLSSAVNLLLVLVLGVGLSG. Residue Cys-24 is the site of N-palmitoyl cysteine attachment. Cys-24 is lipidated: S-diacylglycerol cysteine.

Belongs to the Ycf48 family. Part of early PSII assembly complexes which includes D1 (psbA) and PsbI; not found in mature PSII. Binds to the lumenal side of PSII complexes. Interacts with YidC.

The protein localises to the cellular thylakoid membrane. A factor required for optimal assembly of photosystem II (PSII), acting in the early stages of PSII assembly. Also plays a role in replacement of photodamaged D1 (psbA). Assists YidC in synthesis of chlorophyll-binding proteins. In Synechococcus sp. (strain CC9902), this protein is Photosystem II assembly lipoprotein Ycf48.